A 561-amino-acid polypeptide reads, in one-letter code: Asparagine synthetase [glutamine-hydrolyzing] (561 aa).

Residue cysteine 2 is the For GATase activity of the active site. A Glutamine amidotransferase type-2 domain is found at 2 to 191; sequence CGIWALFGSD…PGHYEVLDLK (190 aa). L-glutamine-binding positions include 49 to 53, 75 to 77, and aspartate 97; these read RLAVV and NGE. Residues 213 to 536 form the Asparagine synthetase domain; sequence HAIYDSVEKL…PGRADWLTHY (324 aa). ATP contacts are provided by residues leucine 256, isoleucine 288, and 363 to 364; that span reads SG. Lysine 385 carries the N6-acetyllysine modification. Threonine 545 is subject to Phosphothreonine. At serine 557 the chain carries Phosphoserine.

It carries out the reaction L-aspartate + L-glutamine + ATP + H2O = L-asparagine + L-glutamate + AMP + diphosphate + H(+). It participates in amino-acid biosynthesis; L-asparagine biosynthesis; L-asparagine from L-aspartate (L-Gln route): step 1/1. This is Asparagine synthetase [glutamine-hydrolyzing] (Asns) from Rattus norvegicus (Rat).